The primary structure comprises 602 residues: MFS-type efflux transporter pyiT (602 aa).

The segment at Met1–Asp33 is disordered. 7 helical membrane passes run Phe43–Val63, Trp123–Thr143, Gly156–Leu176, Ile185–Val205, Trp212–Leu232, Phe251–Gly271, and Ile282–Ser302. Asn317 carries N-linked (GlcNAc...) asparagine glycosylation. The next 6 membrane-spanning stretches (helical) occupy residues Ile325 to Phe345, Gly357 to Leu377, Asn386 to Asn406, Ser410 to Ala430, Thr451 to Phe471, and Leu524 to Leu544. Residues Ile564–Gln585 show a composition bias toward polar residues. A disordered region spans residues Ile564–Val602. Asn580 is a glycosylation site (N-linked (GlcNAc...) asparagine).

Belongs to the major facilitator superfamily.

It is found in the cell membrane. Its function is as follows. MFS-type efflux transporter; part of the gene cluster that mediates the biosynthesis of the mycotoxin pyrichalasin H, a tyrosine-derived cytochalasan that inhibits the growth of rice seedlings, but also inhibits lymphocyte capping and actin polymerization and alters cell morphology. Pyrichalasin H is indicated as the responsible agent for the genus-specific pathogenicity of M.grisea toward crabgrass. PyiT might be involved in the excretion of pyrichalasin H. The polypeptide is MFS-type efflux transporter pyiT (Pyricularia grisea (Crabgrass-specific blast fungus)).